Here is a 211-residue protein sequence, read N- to C-terminus: MYQPDFPTVPFRLGLYPVVDSVAWIERLLEVGVRTIQLRIKDKRNEEVEADVIAAIALGRRYDARLFINDYWRLAIKHRAYGVHLGQEDLETTDLKAIQAAGLRLGVSTHDDMEIDVALAAKPSYIALGHVFPTQTKQMPSAPQGLAQLASHIERLADYPTVAIGGISLERAPAVLATGVGSVAVVSAITQAADWREATAQLLAIVGVGDE.

4-amino-2-methyl-5-(diphosphooxymethyl)pyrimidine is bound by residues 37–41 (QLRIK) and Asn69. Residues Asp70 and Asp89 each contribute to the Mg(2+) site. Position 108 (Ser108) interacts with 4-amino-2-methyl-5-(diphosphooxymethyl)pyrimidine. 134-136 (TQT) contributes to the 2-[(2R,5Z)-2-carboxy-4-methylthiazol-5(2H)-ylidene]ethyl phosphate binding site. Residue Lys137 coordinates 4-amino-2-methyl-5-(diphosphooxymethyl)pyrimidine. 2-[(2R,5Z)-2-carboxy-4-methylthiazol-5(2H)-ylidene]ethyl phosphate is bound by residues Gly166 and 186 to 187 (VS).

The protein belongs to the thiamine-phosphate synthase family. The cofactor is Mg(2+).

It carries out the reaction 2-[(2R,5Z)-2-carboxy-4-methylthiazol-5(2H)-ylidene]ethyl phosphate + 4-amino-2-methyl-5-(diphosphooxymethyl)pyrimidine + 2 H(+) = thiamine phosphate + CO2 + diphosphate. It catalyses the reaction 2-(2-carboxy-4-methylthiazol-5-yl)ethyl phosphate + 4-amino-2-methyl-5-(diphosphooxymethyl)pyrimidine + 2 H(+) = thiamine phosphate + CO2 + diphosphate. The catalysed reaction is 4-methyl-5-(2-phosphooxyethyl)-thiazole + 4-amino-2-methyl-5-(diphosphooxymethyl)pyrimidine + H(+) = thiamine phosphate + diphosphate. Its pathway is cofactor biosynthesis; thiamine diphosphate biosynthesis; thiamine phosphate from 4-amino-2-methyl-5-diphosphomethylpyrimidine and 4-methyl-5-(2-phosphoethyl)-thiazole: step 1/1. Functionally, condenses 4-methyl-5-(beta-hydroxyethyl)thiazole monophosphate (THZ-P) and 2-methyl-4-amino-5-hydroxymethyl pyrimidine pyrophosphate (HMP-PP) to form thiamine monophosphate (TMP). This Salmonella choleraesuis (strain SC-B67) protein is Thiamine-phosphate synthase.